A 413-amino-acid polypeptide reads, in one-letter code: Multifunctional CCA protein (413 aa).

Residues G8 and R11 each contribute to the ATP site. Residues G8 and R11 each contribute to the CTP site. Mg(2+)-binding residues include D21 and D23. Residues R91, R137, and R140 each contribute to the ATP site. 3 residues coordinate CTP: R91, R137, and R140. One can recognise an HD domain in the interval 228-329; the sequence is TGVHTLMTLS…VKLFDAIDAW (102 aa).

It belongs to the tRNA nucleotidyltransferase/poly(A) polymerase family. Bacterial CCA-adding enzyme type 1 subfamily. Monomer. Can also form homodimers and oligomers. Mg(2+) serves as cofactor. It depends on Ni(2+) as a cofactor.

It carries out the reaction a tRNA precursor + 2 CTP + ATP = a tRNA with a 3' CCA end + 3 diphosphate. The catalysed reaction is a tRNA with a 3' CCA end + 2 CTP + ATP = a tRNA with a 3' CCACCA end + 3 diphosphate. Catalyzes the addition and repair of the essential 3'-terminal CCA sequence in tRNAs without using a nucleic acid template. Adds these three nucleotides in the order of C, C, and A to the tRNA nucleotide-73, using CTP and ATP as substrates and producing inorganic pyrophosphate. tRNA 3'-terminal CCA addition is required both for tRNA processing and repair. Also involved in tRNA surveillance by mediating tandem CCA addition to generate a CCACCA at the 3' terminus of unstable tRNAs. While stable tRNAs receive only 3'-terminal CCA, unstable tRNAs are marked with CCACCA and rapidly degraded. The polypeptide is Multifunctional CCA protein (Salmonella schwarzengrund (strain CVM19633)).